The chain runs to 247 residues: uncharacterized protein (247 aa).

To M.pneumoniae MPN_635 N-terminal region.

This is an uncharacterized protein from Mycoplasma pneumoniae (strain ATCC 29342 / M129 / Subtype 1) (Mycoplasmoides pneumoniae).